Consider the following 494-residue polypeptide: Homeotic protein bicoid (494 aa).

Disordered regions lie at residues M1 to F49, R149 to M210, and Q263 to Q293. Residues P14–H40 are compositionally biased toward basic residues. Residues P97–S156 constitute a DNA-binding region (homeobox). Residues I154–S163 show a composition bias toward basic and acidic residues. Residues R433–F440 are RNA-binding.

The protein belongs to the paired homeobox family. Bicoid subfamily. Interacts with Bin1; in vitro and yeast cells. Interacts with bin3. As to expression, maternal expression is an anterior cap concentrated in the cortical cytoplasm. Its transcript is produced maternally and sequestered near the anterior pole of the mature oocyte. After egg deposition, it is translated into protein, which diffuses toward the posterior, forming a long-range anterior gradient.

It localises to the nucleus. Functionally, segment polarity transcription factor that provides positional cues for the development of head and thoracic segments. Forms a protein concentration gradient that patterns the anterior-posterior axis during embryogenesis and promotes the expression of anterior gap genes, such as hunchback (hb), ocelliless (oc), and buttonhead (btd). Binds to regulatory DNA sequences containing a 5'-TAATCC-3' sequence motif. Also binds RNA. Interacts with Bin1 to repress transcription of bicoid target genes in the anterior tip of the embryo; a process known as retraction. The sequence is that of Homeotic protein bicoid from Drosophila melanogaster (Fruit fly).